We begin with the raw amino-acid sequence, 260 residues long: Indole-3-glycerol phosphate synthase (260 aa).

This sequence belongs to the TrpC family.

It carries out the reaction 1-(2-carboxyphenylamino)-1-deoxy-D-ribulose 5-phosphate + H(+) = (1S,2R)-1-C-(indol-3-yl)glycerol 3-phosphate + CO2 + H2O. The protein operates within amino-acid biosynthesis; L-tryptophan biosynthesis; L-tryptophan from chorismate: step 4/5. This chain is Indole-3-glycerol phosphate synthase, found in Ruminiclostridium cellulolyticum (strain ATCC 35319 / DSM 5812 / JCM 6584 / H10) (Clostridium cellulolyticum).